A 178-amino-acid polypeptide reads, in one-letter code: CASP-like protein 2U3 (178 aa).

At 1–4 (MACR) the chain is on the cytoplasmic side. Residues 5–25 (VMEVLLRVLAILLSIAGALVM) form a helical membrane-spanning segment. Topologically, residues 26 to 52 (AKDKQDTFVMLGTVPVPLYARHSYVEA) are extracellular. The helical transmembrane segment at 53–73 (FVFLVYANGIVAIYCFIAVLL) threads the bilayer. The Cytoplasmic segment spans residues 74–80 (SLLAKSR). The helical transmembrane segment at 81–101 (VLAGLLFFMDQALAYLLLAAA) threads the bilayer. Topologically, residues 102–132 (AASTEVAYIAKRGEKKLVWGEVCSNFEHFCN) are extracellular. Residues 133 to 153 (LVGVSLVLTFLSVLVLVTLAI) form a helical membrane-spanning segment. Residues 154 to 178 (LSGKRLFGHPPLCAPPSTPPVHQGV) lie on the Cytoplasmic side of the membrane.

This sequence belongs to the Casparian strip membrane proteins (CASP) family. Homodimer and heterodimers.

The protein localises to the cell membrane. The protein is CASP-like protein 2U3 of Pteridium aquilinum subsp. aquilinum (Bracken fern).